The primary structure comprises 155 residues: Ribosomal RNA large subunit methyltransferase H (155 aa).

Residues Leu73, Gly104, and 123 to 128 (LSPLTL) each bind S-adenosyl-L-methionine.

The protein belongs to the RNA methyltransferase RlmH family. As to quaternary structure, homodimer.

It is found in the cytoplasm. It carries out the reaction pseudouridine(1915) in 23S rRNA + S-adenosyl-L-methionine = N(3)-methylpseudouridine(1915) in 23S rRNA + S-adenosyl-L-homocysteine + H(+). Specifically methylates the pseudouridine at position 1915 (m3Psi1915) in 23S rRNA. This is Ribosomal RNA large subunit methyltransferase H from Pseudomonas putida (strain W619).